The sequence spans 409 residues: Peptidase T (409 aa).

His80 serves as a coordination point for Zn(2+). Asp82 is a catalytic residue. Asp143 serves as a coordination point for Zn(2+). Glu177 serves as the catalytic Proton acceptor. The Zn(2+) site is built by Glu178, Asp200, and His382.

The protein belongs to the peptidase M20B family. It depends on Zn(2+) as a cofactor.

The protein localises to the cytoplasm. The enzyme catalyses Release of the N-terminal residue from a tripeptide.. Cleaves the N-terminal amino acid of tripeptides. This Alkaliphilus oremlandii (strain OhILAs) (Clostridium oremlandii (strain OhILAs)) protein is Peptidase T.